Here is a 362-residue protein sequence, read N- to C-terminus: Notoamide biosynthesis cluster protein J' (362 aa).

An N-terminal signal peptide occupies residues 1–22 (MRNMATMLHLLTLILLTSPAST). Asparagine 157, asparagine 190, asparagine 280, and asparagine 338 each carry an N-linked (GlcNAc...) asparagine glycan.

Part of the gene cluster that mediates the biosynthesis of notoamide, a fungal indole alkaloid that belongs to a family of natural products containing a characteristic bicyclo[2.2.2]diazaoctane core. The first step of notoamide biosynthesis involves coupling of L-proline and L-tryptophan by the bimodular NRPS notE', to produce cyclo-L-tryptophan-L-proline called brevianamide F. The reverse prenyltransferase notF' then acts as a deoxybrevianamide E synthase and converts brevianamide F to deoxybrevianamide E via reverse prenylation at C-2 of the indole ring leading to the bicyclo[2.2.2]diazaoctane core. Deoxybrevianamide E is further hydroxylated at C-6 of the indole ring, likely catalyzed by the cytochrome P450 monooxygenase notG', to yield 6-hydroxy-deoxybrevianamide E. 6-hydroxy-deoxybrevianamide E is a specific substrate of the prenyltransferase notC' for normal prenylation at C-7 to produce 6-hydroxy-7-prenyl-deoxybrevianamide, also called notoamide S. As the proposed pivotal branching point in notoamide biosynthesis, notoamide S can be diverted to notoamide E through an oxidative pyran ring closure putatively catalyzed by either notH' cytochrome P450 monooxygenase or the notD' FAD-linked oxidoreductase. This step would be followed by an indole 2,3-epoxidation-initiated pinacol-like rearrangement catalyzed by the notB' FAD-dependent monooxygenase leading to the formation of notoamide C and notoamide D. On the other hand notoamide S is converted to notoamide T by notH' (or notD'), a bifunctional oxidase that also functions as the intramolecular Diels-Alderase responsible for generation of (-)-notoamide T. To generate antipodal (+)-notoaminide T, notH (or notD) in Aspergillus strain MF297-2 is expected to catalyze a Diels-Alder reaction leading to the opposite stereochemistry. The remaining oxidoreductase notD' (or notH') likely catalyzes the oxidative pyran ring formation to yield (-)-stephacidin A. The FAD-dependent monooxygenase notI' is highly similar to notB' and is predicted to catalyze a similar conversion from (-)-stephacidin A to (+)-notoamide B via the 2,3-epoxidation of (-)-stephacidin A followed by a pinacol-type rearrangement. Finally, it remains unclear which enzyme could be responsible for the final hydroxylation steps leading to notoamide A and sclerotiamide. The function of notJ' in the notoamide biosynthesis has not been determined yet. This chain is Notoamide biosynthesis cluster protein J', found in Aspergillus versicolor.